The sequence spans 97 residues: Small ribosomal subunit protein uS19 (97 aa).

Belongs to the universal ribosomal protein uS19 family.

Its function is as follows. Protein S19 forms a complex with S13 that binds strongly to the 16S ribosomal RNA. This Salinibacter ruber (strain DSM 13855 / M31) protein is Small ribosomal subunit protein uS19.